A 486-amino-acid chain; its full sequence is Palmitoleoyl-protein carboxylesterase notum2 (486 aa).

An N-terminal signal peptide occupies residues 1 to 18 (MRILEIFAILLILKEVRP). N-linked (GlcNAc...) asparagine glycosylation is present at asparagine 183. Active-site charge relay system residues include serine 223, aspartate 331, and histidine 380.

The protein belongs to the pectinacetylesterase family. Notum subfamily.

It is found in the secreted. The catalysed reaction is [Wnt protein]-O-(9Z)-hexadecenoyl-L-serine + H2O = [Wnt protein]-L-serine + (9Z)-hexadecenoate + H(+). In terms of biological role, carboxylesterase that acts as a key negative regulator of the Wnt signaling pathway by specifically mediating depalmitoleoylation of WNT proteins. Serine palmitoleoylation of WNT proteins is required for efficient binding to frizzled receptors. This is Palmitoleoyl-protein carboxylesterase notum2 from Xenopus laevis (African clawed frog).